The following is a 533-amino-acid chain: Flavin-containing monooxygenase 5 (533 aa).

Arg5 is subject to Dimethylated arginine. FAD-binding positions include 10 to 14 (GGGVS), Glu33, and 41 to 42 (LW). Ser54 carries the post-translational modification Phosphoserine. Tyr56 bears the Phosphotyrosine mark. Ser58 bears the Phosphoserine mark. 62–63 (NT) is a binding site for FAD. 196 to 199 (SGGD) contributes to the NADP(+) binding site. The residue at position 280 (Ser280) is a Phosphoserine. Position 284 is a phosphothreonine (Thr284). A Phosphoserine modification is found at Ser401. The chain crosses the membrane as a helical span at residues 513–533 (TMTIGKFMLALAFFAIIIAYF).

This sequence belongs to the FMO family. FAD is required as a cofactor. Expressed in fetal and adult liver.

It is found in the microsome membrane. The protein localises to the endoplasmic reticulum membrane. It carries out the reaction N,N-dimethylaniline + NADPH + O2 + H(+) = N,N-dimethylaniline N-oxide + NADP(+) + H2O. It catalyses the reaction NADPH + O2 + H(+) = H2O2 + NADP(+). The catalysed reaction is heptan-2-one + NADPH + O2 + H(+) = pentyl acetate + NADP(+) + H2O. The enzyme catalyses octan-3-one + NADPH + O2 + H(+) = pentyl propanoate + NADP(+) + H2O. It carries out the reaction octan-3-one + NADPH + O2 + H(+) = ethyl hexanoate + NADP(+) + H2O. It catalyses the reaction hexan-3-one + NADPH + O2 + H(+) = ethyl butanoate + NADP(+) + H2O. The catalysed reaction is hexan-3-one + NADPH + O2 + H(+) = propyl propanoate + NADP(+) + H2O. The enzyme catalyses heptan-4-one + NADPH + O2 + H(+) = propyl butanoate + NADP(+) + H2O. It carries out the reaction (2E)-geranial + NADPH + O2 + H(+) = (1E)-2,6-dimethylhepta-1,5-dien-1-yl formate + NADP(+) + H2O. It catalyses the reaction sulcatone + NADPH + O2 + H(+) = 4-methylpent-3-en-1-yl acetate + NADP(+) + H2O. Acts as a Baeyer-Villiger monooxygenase on a broad range of substrates. Catalyzes the insertion of an oxygen atom into a carbon-carbon bond adjacent to a carbonyl, which converts ketones to esters. Active on diverse carbonyl compounds, whereas soft nucleophiles are mostly non- or poorly reactive. In contrast with other forms of FMO it is non- or poorly active on 'classical' substrates such as drugs, pesticides, and dietary components containing soft nucleophilic heteroatoms. Able to oxidize drug molecules bearing a carbonyl group on an aliphatic chain, such as nabumetone and pentoxifylline. Also, in the absence of substrates, shows slow but yet significant NADPH oxidase activity. Acts as a positive modulator of cholesterol biosynthesis as well as glucose homeostasis, promoting metabolic aging via pleiotropic effects. This is Flavin-containing monooxygenase 5 from Homo sapiens (Human).